The chain runs to 906 residues: MKKKVTIVTIILFLLVIVGSFGKVTDFIINLEWFKEIGYTSVYFTKLAAILKLMIPIFIIIYTGLWFYYKSIRKIIIKWNKVVEVNVKTEKLKKRVAIVIDVIASFFVAYFTSSVYWYRILQFTSGNSFNIKDPIFNLDVSFYVFRLPLIESLYGVMLLFLIFMAVLTVILYIVLSLRDRVYNRNIGGINISFKEFFKGLSDFAGRQFAIISGLIMFLVAVGYAIRSFNLVYSPRGVVYGGGYTDIHVSLVFYVIIIAAAIVSSVVIFTSIIKYKIKPIFVSIVAILILIIGQSITAEIVQNLIVKSNEKNLEAPYIKNNIEYTRKAFNIDKLSESNFPSSDSLTQADIDSNRDTVNNIKVNSVTPALEFYNQVQVVRYYYDFRDLDVDRYNIGGKYSEVFLAPREIDSKSLEGNADTWQNRHLIYTHGYGLVMSKVNSVTSEGQPNFVIKDIPPQNSTNLKITNPRIYYGEETDDYAIANNTLGEFDYPDGSKNKTNNYDGKGGIKANILNRLIFAINKRDSNFLLSENITSNSKILINRNIMDRLNKIAPFLSYDKDPYVVLSGGKLFWIVDAYTTSDRFPYSQPYNNVNYIRNSVKVVIDAVDGTTNFYIVDKNDPIANSYSKIFPGLFKDVSQVPKDIRSHFKYPEDLFSTQCNVLGKYHVTDTGVFYNSEDLWETAKNQKQINGEKGVNDASYFIMRLPGENKSEMVLMEYFNMKDKDNMSAIFGARMDGNNYGKLILYKLPTDKTVYSPYLFKQKLNQDPSISKEVSLWNTQGSSVQFGDTSIIPIKNSLLYVEPVYLRAQGKNSMPEVKRVIVSFGNKMVMANSIDEALNQIFNNSSNNQSETRTETGGTSTDSSNNKDKLKQAQDLYNQAVDAQKNGDWSKYGDYINKLGKTLDELNK.

The next 7 helical transmembrane spans lie at 7 to 29 (IVTI…DFII), 47 to 69 (LAAI…WFYY), 96 to 118 (VAIV…VYWY), 153 to 175 (LYGV…YIVL), 208 to 230 (FAII…SFNL), 250 to 272 (LVFY…TSII), and 279 to 301 (IFVS…EIVQ). The span at 842-862 (NSSNNQSETRTETGGTSTDSS) shows a compositional bias: low complexity. Positions 842–875 (NSSNNQSETRTETGGTSTDSSNNKDKLKQAQDLY) are disordered.

Belongs to the UPF0182 family.

Its subcellular location is the cell membrane. The polypeptide is UPF0182 protein CA_C0010 (Clostridium acetobutylicum (strain ATCC 824 / DSM 792 / JCM 1419 / IAM 19013 / LMG 5710 / NBRC 13948 / NRRL B-527 / VKM B-1787 / 2291 / W)).